Reading from the N-terminus, the 210-residue chain is Redox-sensing transcriptional repressor Rex (210 aa).

The segment at residues Ile16–Phe55 is a DNA-binding region (H-T-H motif). Gly90–Gly95 is a binding site for NAD(+).

Belongs to the transcriptional regulatory Rex family. As to quaternary structure, homodimer.

It localises to the cytoplasm. Modulates transcription in response to changes in cellular NADH/NAD(+) redox state. The chain is Redox-sensing transcriptional repressor Rex from Syntrophobacter fumaroxidans (strain DSM 10017 / MPOB).